Reading from the N-terminus, the 225-residue chain is Cytidylate kinase (225 aa).

Glycine 11–threonine 19 provides a ligand contact to ATP.

This sequence belongs to the cytidylate kinase family. Type 1 subfamily.

The protein localises to the cytoplasm. The catalysed reaction is CMP + ATP = CDP + ADP. The enzyme catalyses dCMP + ATP = dCDP + ADP. The chain is Cytidylate kinase from Lawsonia intracellularis (strain PHE/MN1-00).